Consider the following 657-residue polypeptide: Cyclic-di-AMP phosphodiesterase PdeA (657 aa).

Transmembrane regions (helical) follow at residues 13–35 (PLYGLIAATIILSVITFFFSWWL) and 37–53 (ALVVVGGIILTVAMFYF). The interval 74-137 (RSEEEALVEM…ITGNDEKGIM (64 aa)) is PAS-like. Residues 175–303 (NKSVFAVIFL…GGDQVVIKQP (129 aa)) form the GGDEF domain. A DHH region spans residues 342–498 (VFVMGHRYPD…IEATALLSGI (157 aa)). Positions 347, 351, 353, 422, 446, and 501 each coordinate Mn(2+). The interval 592–645 (VITLRPDKLIGISARSLGQINVQVIMEKLGGGGHLSNAATQLKDVTIAEAEKQL) is DHHA1.

Belongs to the GdpP/PdeA phosphodiesterase family. Heme b serves as cofactor. Requires Mn(2+) as cofactor.

The protein localises to the cell membrane. The catalysed reaction is 3',3'-c-di-AMP + H2O = 5'-O-phosphonoadenylyl-(3'-&gt;5')-adenosine + H(+). Has phosphodiesterase (PDE) activity against cyclic-di-AMP (c-di-AMP). Overexpression decreases export of c-di-AMP, leads to slightly increased susceptibility to the antibiotic cefuroxime and somewhat slower growth in macrophages. There are at least 2 PDEs for c-di-AMP in this bacteria (this one and pgpH); this may be the major PDE for intracellular growth in host macrophages. During host infection c-di-AMP is secreted into the host cytoplasm which leads to interferon-beta production and secretion by the host. c-di-AMP is a second messenger that mediates growth, cell wall stability and virulence. May monitor cellular heme or NO levels. In Listeria monocytogenes serotype 1/2a (strain 10403S), this protein is Cyclic-di-AMP phosphodiesterase PdeA.